Here is a 111-residue protein sequence, read N- to C-terminus: Putative pterin-4-alpha-carbinolamine dehydratase (111 aa).

The protein belongs to the pterin-4-alpha-carbinolamine dehydratase family.

It carries out the reaction (4aS,6R)-4a-hydroxy-L-erythro-5,6,7,8-tetrahydrobiopterin = (6R)-L-erythro-6,7-dihydrobiopterin + H2O. The protein is Putative pterin-4-alpha-carbinolamine dehydratase of Marinobacter nauticus (strain ATCC 700491 / DSM 11845 / VT8) (Marinobacter aquaeolei).